The following is a 291-amino-acid chain: Probable peptide ABC transporter permease protein y4tQ (291 aa).

5 consecutive transmembrane segments (helical) span residues 28-48 (LVLL…AAPL), 92-112 (LIVG…IGVI), 137-157 (LLAI…IVAI), 213-233 (ATVC…GVGV), and 249-269 (LFLA…AVTV). In terms of domain architecture, ABC transmembrane type-1 spans 88–276 (ARISLIVGLL…VTVLAVNLLG (189 aa)).

It belongs to the binding-protein-dependent transport system permease family. OppBC subfamily.

The protein resides in the cell inner membrane. Probably part of the binding-protein-dependent transport system y4tOPQRS for a peptide. Probably responsible for the translocation of the substrate across the membrane. The chain is Probable peptide ABC transporter permease protein y4tQ from Sinorhizobium fredii (strain NBRC 101917 / NGR234).